Reading from the N-terminus, the 454-residue chain is Allantoinase (454 aa).

Zn(2+) is bound by residues His59, His61, Lys150, His190, His246, and Asp319. Residue Lys150 is modified to N6-carboxylysine.

The protein belongs to the metallo-dependent hydrolases superfamily. Allantoinase family. Homotetramer. Zn(2+) serves as cofactor. In terms of processing, carboxylation allows a single lysine to coordinate two zinc ions.

The catalysed reaction is (S)-allantoin + H2O = allantoate + H(+). The protein operates within nitrogen metabolism; (S)-allantoin degradation; allantoate from (S)-allantoin: step 1/1. Functionally, catalyzes the conversion of allantoin (5-ureidohydantoin) to allantoic acid by hydrolytic cleavage of the five-member hydantoin ring. This is Allantoinase from Bacillus licheniformis (strain ATCC 14580 / DSM 13 / JCM 2505 / CCUG 7422 / NBRC 12200 / NCIMB 9375 / NCTC 10341 / NRRL NRS-1264 / Gibson 46).